The following is a 290-amino-acid chain: N-acetylneuraminate lyase (290 aa).

Positions 44 and 45 each coordinate aceneuramate. Tyrosine 133 acts as the Proton donor in catalysis. Catalysis depends on lysine 161, which acts as the Schiff-base intermediate with substrate. Aceneuramate contacts are provided by threonine 163, glycine 185, aspartate 187, glutamate 188, and serine 204.

Belongs to the DapA family. NanA subfamily. As to quaternary structure, homotetramer.

The protein resides in the cytoplasm. The enzyme catalyses aceneuramate = aldehydo-N-acetyl-D-mannosamine + pyruvate. It participates in amino-sugar metabolism; N-acetylneuraminate degradation; D-fructose 6-phosphate from N-acetylneuraminate: step 1/5. Functionally, catalyzes the reversible aldol cleavage of N-acetylneuraminic acid (sialic acid; Neu5Ac) to form pyruvate and N-acetylmannosamine (ManNAc) via a Schiff base intermediate. The chain is N-acetylneuraminate lyase from Fusobacterium nucleatum subsp. nucleatum (strain ATCC 25586 / DSM 15643 / BCRC 10681 / CIP 101130 / JCM 8532 / KCTC 2640 / LMG 13131 / VPI 4355).